The sequence spans 320 residues: Replication factor C small subunit 2 (320 aa).

An ATP-binding site is contributed by 44–51 (GPPGTGKT).

It belongs to the activator 1 small subunits family. RfcS subfamily. Heteromultimer composed of small subunits (RfcS) and large subunits (RfcL).

Functionally, part of the RFC clamp loader complex which loads the PCNA sliding clamp onto DNA. The polypeptide is Replication factor C small subunit 2 (Pyrobaculum islandicum (strain DSM 4184 / JCM 9189 / GEO3)).